The sequence spans 274 residues: uncharacterized protein (274 aa).

Positions 1–30 are cleaved as a signal peptide; it reads MTVYTPTSERQAPATTHRQMWALGDYAAIA.

It to M.tuberculosis Rv1405c.

This is an uncharacterized protein from Mycobacterium tuberculosis (strain CDC 1551 / Oshkosh).